A 241-amino-acid polypeptide reads, in one-letter code: Pyridoxine 5'-phosphate synthase (241 aa).

Position 7 (N7) interacts with 3-amino-2-oxopropyl phosphate. 9–10 (DH) contacts 1-deoxy-D-xylulose 5-phosphate. R18 contacts 3-amino-2-oxopropyl phosphate. H43 functions as the Proton acceptor in the catalytic mechanism. The 1-deoxy-D-xylulose 5-phosphate site is built by R45 and H50. E70 (proton acceptor) is an active-site residue. T100 is a 1-deoxy-D-xylulose 5-phosphate binding site. Residue H191 is the Proton donor of the active site. 3-amino-2-oxopropyl phosphate-binding positions include G192 and 213–214 (GH).

The protein belongs to the PNP synthase family. As to quaternary structure, homooctamer; tetramer of dimers.

The protein localises to the cytoplasm. It catalyses the reaction 3-amino-2-oxopropyl phosphate + 1-deoxy-D-xylulose 5-phosphate = pyridoxine 5'-phosphate + phosphate + 2 H2O + H(+). Its pathway is cofactor biosynthesis; pyridoxine 5'-phosphate biosynthesis; pyridoxine 5'-phosphate from D-erythrose 4-phosphate: step 5/5. In terms of biological role, catalyzes the complicated ring closure reaction between the two acyclic compounds 1-deoxy-D-xylulose-5-phosphate (DXP) and 3-amino-2-oxopropyl phosphate (1-amino-acetone-3-phosphate or AAP) to form pyridoxine 5'-phosphate (PNP) and inorganic phosphate. The chain is Pyridoxine 5'-phosphate synthase from Nitrosospira multiformis (strain ATCC 25196 / NCIMB 11849 / C 71).